The following is a 170-amino-acid chain: Endoribonuclease YbeY (170 aa).

3 residues coordinate Zn(2+): His-128, His-132, and His-138.

The protein belongs to the endoribonuclease YbeY family. Zn(2+) serves as cofactor.

It localises to the cytoplasm. Its function is as follows. Single strand-specific metallo-endoribonuclease involved in late-stage 70S ribosome quality control and in maturation of the 3' terminus of the 16S rRNA. The sequence is that of Endoribonuclease YbeY from Ruegeria sp. (strain TM1040) (Silicibacter sp.).